The sequence spans 252 residues: UPF0246 protein Fjoh_4905 (252 aa).

It belongs to the UPF0246 family.

The sequence is that of UPF0246 protein Fjoh_4905 from Flavobacterium johnsoniae (strain ATCC 17061 / DSM 2064 / JCM 8514 / BCRC 14874 / CCUG 350202 / NBRC 14942 / NCIMB 11054 / UW101) (Cytophaga johnsonae).